The sequence spans 730 residues: DNA ligase (730 aa).

The segment at 1 to 23 (MAGEQHAQPTSVPAEAREKHAQL) is disordered. Residues 44 to 48 (DAEFD), 93 to 94 (SL), and glutamate 124 contribute to the NAD(+) site. The active-site N6-AMP-lysine intermediate is lysine 126. Arginine 147, glutamate 184, lysine 300, and lysine 324 together coordinate NAD(+). Zn(2+) is bound by residues cysteine 418, cysteine 421, cysteine 437, and cysteine 443. The region spanning 638–727 (EGPRPLEGLT…PEAAAEVALP (90 aa)) is the BRCT domain.

The protein belongs to the NAD-dependent DNA ligase family. LigA subfamily. Mg(2+) is required as a cofactor. Requires Mn(2+) as cofactor.

The enzyme catalyses NAD(+) + (deoxyribonucleotide)n-3'-hydroxyl + 5'-phospho-(deoxyribonucleotide)m = (deoxyribonucleotide)n+m + AMP + beta-nicotinamide D-nucleotide.. Functionally, DNA ligase that catalyzes the formation of phosphodiester linkages between 5'-phosphoryl and 3'-hydroxyl groups in double-stranded DNA using NAD as a coenzyme and as the energy source for the reaction. It is essential for DNA replication and repair of damaged DNA. The protein is DNA ligase of Streptomyces avermitilis (strain ATCC 31267 / DSM 46492 / JCM 5070 / NBRC 14893 / NCIMB 12804 / NRRL 8165 / MA-4680).